We begin with the raw amino-acid sequence, 639 residues long: Polypeptide N-acetylgalactosaminyltransferase 15 (639 aa).

Residues M1 to P11 lie on the Cytoplasmic side of the membrane. A helical; Signal-anchor for type II membrane protein transmembrane segment spans residues C12 to H34. The Lumenal segment spans residues P35–R639. Residues R106–D155 form a disordered region. An N-linked (GlcNAc...) asparagine glycan is attached at N107. Residues R124 to G136 show a composition bias toward basic and acidic residues. Residues A137–L149 are compositionally biased toward acidic residues. 5 disulfide bridges follow: C181–C412, C403–C482, C517–C536, C562–C575, and C603–C620. The interval L190–R299 is catalytic subdomain A. Residues D231 and R260 each coordinate substrate. Positions 283, 285, and 417 each coordinate Mn(2+). A catalytic subdomain B region spans residues P358 to Q420. The Ricin B-type lectin domain occupies S504–D631. A glycan (N-linked (GlcNAc...) asparagine) is linked at N574.

This sequence belongs to the glycosyltransferase 2 family. GalNAc-T subfamily. Mn(2+) is required as a cofactor. Widely expressed. Highly expressed in small intestine, placenta, spleen, cerebral cortex and ovary. Expressed at intermediate level in uterus, mammary gland, stomach, cerebellum and whole brain. Weakly expressed in fetal brain, bone marrow, thyroid gland, thymus, heart, skeletal muscle, lung, liver, colon, pancreas, kidney and testis. Not expressed in leukocyte. Expressed in both normal and osteoarthritic cartilage. Expressed at low level in chondrocytes in all zones of both normal and osteoarthritic cartilage.

The protein resides in the golgi apparatus membrane. It catalyses the reaction L-seryl-[protein] + UDP-N-acetyl-alpha-D-galactosamine = a 3-O-[N-acetyl-alpha-D-galactosaminyl]-L-seryl-[protein] + UDP + H(+). It carries out the reaction L-threonyl-[protein] + UDP-N-acetyl-alpha-D-galactosamine = a 3-O-[N-acetyl-alpha-D-galactosaminyl]-L-threonyl-[protein] + UDP + H(+). Its pathway is protein modification; protein glycosylation. Its function is as follows. Catalyzes the initial reaction in O-linked oligosaccharide biosynthesis, the transfer of an N-acetyl-D-galactosamine residue to a serine or threonine residue on the protein receptor. Although it displays a much weaker activity toward all substrates tested compared to GALNT2, it is able to transfer up to seven GalNAc residues to the Muc5AC peptide, suggesting that it can fill vicinal Thr/Ser residues in cooperation with other GALNT proteins. Prefers Muc1a as substrate. In Homo sapiens (Human), this protein is Polypeptide N-acetylgalactosaminyltransferase 15 (GALNT15).